Here is a 463-residue protein sequence, read N- to C-terminus: Glutamate--tRNA ligase 2 (463 aa).

A 'HIGH' region motif is present at residues 11–21 (PSPTGYLHIGG). Residues 240 to 244 (KLSKR) carry the 'KMSKS' region motif. Lys-243 contacts ATP.

This sequence belongs to the class-I aminoacyl-tRNA synthetase family. Glutamate--tRNA ligase type 1 subfamily. In terms of assembly, monomer.

It localises to the cytoplasm. It catalyses the reaction tRNA(Glu) + L-glutamate + ATP = L-glutamyl-tRNA(Glu) + AMP + diphosphate. Its function is as follows. Catalyzes the attachment of glutamate to tRNA(Glu) in a two-step reaction: glutamate is first activated by ATP to form Glu-AMP and then transferred to the acceptor end of tRNA(Glu). The sequence is that of Glutamate--tRNA ligase 2 from Campylobacter jejuni subsp. jejuni serotype O:2 (strain ATCC 700819 / NCTC 11168).